We begin with the raw amino-acid sequence, 424 residues long: Histidine--tRNA ligase (424 aa).

This sequence belongs to the class-II aminoacyl-tRNA synthetase family. In terms of assembly, homodimer.

It localises to the cytoplasm. The catalysed reaction is tRNA(His) + L-histidine + ATP = L-histidyl-tRNA(His) + AMP + diphosphate + H(+). The chain is Histidine--tRNA ligase from Klebsiella pneumoniae (strain 342).